Consider the following 202-residue polypeptide: Glycerol-3-phosphate acyltransferase (202 aa).

4 helical membrane-spanning segments follow: residues 2–22 (ANLL…AVVV), 82–102 (DTGL…PVFH), 119–139 (AIDP…AFFF), and 158–178 (VLMN…VLLI).

It belongs to the PlsY family. Probably interacts with PlsX.

The protein localises to the cell inner membrane. The enzyme catalyses an acyl phosphate + sn-glycerol 3-phosphate = a 1-acyl-sn-glycero-3-phosphate + phosphate. Its pathway is lipid metabolism; phospholipid metabolism. Its function is as follows. Catalyzes the transfer of an acyl group from acyl-phosphate (acyl-PO(4)) to glycerol-3-phosphate (G3P) to form lysophosphatidic acid (LPA). This enzyme utilizes acyl-phosphate as fatty acyl donor, but not acyl-CoA or acyl-ACP. The polypeptide is Glycerol-3-phosphate acyltransferase (Cupriavidus taiwanensis (strain DSM 17343 / BCRC 17206 / CCUG 44338 / CIP 107171 / LMG 19424 / R1) (Ralstonia taiwanensis (strain LMG 19424))).